The chain runs to 177 residues: MSRVAKAPVVIPAGVDVKLNGQVITIKGKNGELTRTLNDAVEVKHADNALTFGPRDGYADGWAQAGTARALLNSMVIGVTEGFTKKLQLVGVGYRAAIKGNVVNLSLGFSHPVDHQLPAGITAECPSQTEIVLKGADKQLIGQVAADLRAYRRPEPYKGKGVRYADEVVRTKEAKKK.

It belongs to the universal ribosomal protein uL6 family. As to quaternary structure, part of the 50S ribosomal subunit.

Functionally, this protein binds to the 23S rRNA, and is important in its secondary structure. It is located near the subunit interface in the base of the L7/L12 stalk, and near the tRNA binding site of the peptidyltransferase center. The polypeptide is Large ribosomal subunit protein uL6 (Cronobacter sakazakii (strain ATCC BAA-894) (Enterobacter sakazakii)).